The primary structure comprises 259 residues: Dihydroorotate dehydrogenase B (NAD(+)), electron transfer subunit (259 aa).

The region spanning 2–102 is the FAD-binding FR-type domain; it reads MQKQNMIVVN…LGPLGHGFPV (101 aa). Residues 53-56, 70-72, and 77-78 contribute to the FAD site; these read RPIS, LYR, and GT. [2Fe-2S] cluster-binding residues include cysteine 221, cysteine 226, cysteine 229, and cysteine 246.

This sequence belongs to the PyrK family. As to quaternary structure, heterotetramer of 2 PyrK and 2 PyrD type B subunits. [2Fe-2S] cluster is required as a cofactor. Requires FAD as cofactor.

The protein operates within pyrimidine metabolism; UMP biosynthesis via de novo pathway; orotate from (S)-dihydroorotate (NAD(+) route): step 1/1. Functionally, responsible for channeling the electrons from the oxidation of dihydroorotate from the FMN redox center in the PyrD type B subunit to the ultimate electron acceptor NAD(+). The polypeptide is Dihydroorotate dehydrogenase B (NAD(+)), electron transfer subunit (Bacillus mycoides (strain KBAB4) (Bacillus weihenstephanensis)).